We begin with the raw amino-acid sequence, 948 residues long: P cell-type agglutination protein map4 (948 aa).

Residues 1–23 (MNSYAILLSLFFSFERLLTLANA) form the signal peptide. N-linked (GlcNAc...) asparagine glycans are attached at residues Asn-31, Asn-32, and Asn-57. Disordered regions lie at residues 136 to 174 (IPRG…IGTG) and 253 to 333 (FYET…PTTY). Over residues 149 to 174 (PTYSASDSSATTITSSSPSTSIIGTG) the composition is skewed to low complexity. Polar residues predominate over residues 253–264 (FYETKSSTSSVP). The span at 265–332 (TQTIDSSSFT…PSLSSALPTT (68 aa)) shows a compositional bias: low complexity. Asn-383 is a glycosylation site (N-linked (GlcNAc...) asparagine). Residues 408-432 (LTSSTKKIPSTTLPTSSKMITTTTP) form a disordered region. Residues Asn-436, Asn-469, Asn-491, Asn-522, Asn-553, Asn-568, and Asn-598 are each glycosylated (N-linked (GlcNAc...) asparagine). 5 tandem repeats follow at residues 617 to 652 (SYVT…IPTP), 653 to 688 (SWVT…IPTP), 689 to 724 (SWVT…IPTP), 725 to 760 (SWVT…IPTP), and 761 to 796 (SWVT…VPTP). The 5 X 36 AA approximate tandem repeats stretch occupies residues 617–796 (SYVTETTTSG…GTVLIDVPTP (180 aa)). One can recognise a DIPSY domain in the interval 796–948 (PTASSSPFPS…ANVVLRALEY (153 aa)). N-linked (GlcNAc...) asparagine glycosylation is present at Asn-921.

Belongs to the mam3/map4 family.

It is found in the cell surface. In terms of biological role, p cell-type specific protein which involved in agglutination during conjugation. This Schizosaccharomyces pombe (strain 972 / ATCC 24843) (Fission yeast) protein is P cell-type agglutination protein map4.